The chain runs to 635 residues: Threonine--tRNA ligase (635 aa).

The 61-residue stretch at 1-61 (MINISLSDGS…ENNCKLRILT (61 aa)) folds into the TGS domain. The interval 242-533 (DHRKLGRELD…LIEEYAGCFP (292 aa)) is catalytic. Positions 333, 384, and 510 each coordinate Zn(2+).

It belongs to the class-II aminoacyl-tRNA synthetase family. In terms of assembly, homodimer. The cofactor is Zn(2+).

It is found in the cytoplasm. The catalysed reaction is tRNA(Thr) + L-threonine + ATP = L-threonyl-tRNA(Thr) + AMP + diphosphate + H(+). In terms of biological role, catalyzes the attachment of threonine to tRNA(Thr) in a two-step reaction: L-threonine is first activated by ATP to form Thr-AMP and then transferred to the acceptor end of tRNA(Thr). Also edits incorrectly charged L-seryl-tRNA(Thr). This Rickettsia canadensis (strain McKiel) protein is Threonine--tRNA ligase.